Consider the following 530-residue polypeptide: Equilibrative nucleoside transporter 4 (530 aa).

The interval 1–21 (MGSVGSQRLEEPSVAGTPDPG) is disordered. At 1–68 (MGSVGSQRLE…DEPVPDDRYH (68 aa)) the chain is on the extracellular side. Residues 69–89 (AIYFAMLLAGVGFLLPYNSFI) form a helical membrane-spanning segment. Topologically, residues 90–101 (TDVDYLHHKYPG) are cytoplasmic. A helical membrane pass occupies residues 102–122 (TSIVFDMSLTYILVALAAVLL). Topologically, residues 123–139 (NNVLVERLTLHTRITAG) are extracellular. Residues 140 to 160 (YLLALGPLLFISICDVWLQLF) traverse the membrane as a helical segment. Over 161 to 166 (SRDQAY) the chain is Cytoplasmic. The chain crosses the membrane as a helical span at residues 167–187 (AINLAAVGTVAFGCTVQQSSF). Residues 188–231 (YGYTGMLPKRYTQGVMTGESTAGVMISLSRILTKLLLPDERAST) lie on the Extracellular side of the membrane. The helical transmembrane segment at 232 to 252 (LIFFLVSVALELLCFLLHLLV) threads the bilayer. Over 253–351 (RRSRFVLFYT…LLLHRYVVAR (99 aa)) the chain is Cytoplasmic. A helical transmembrane segment spans residues 352-372 (VIWADMLSIAVTYFITLCLFP). Residues 373–381 (GLESEIRHC) are Extracellular-facing. A helical transmembrane segment spans residues 382-402 (ILGEWLPILIMAVFNLSDFVG). The Cytoplasmic portion of the chain corresponds to 403–416 (KILAALPVDWRGTH). A helical transmembrane segment spans residues 417–437 (LLACSCLRVVFIPLFILCVYP). Residues 438–450 (SGMPALRHPAWPC) are Extracellular-facing. The helical transmembrane segment at 451–471 (IFSLLMGISNGYFGSVPMILA) threads the bilayer. Over 472-486 (AGKVSPKQRELAGNT) the chain is Cytoplasmic. A helical transmembrane segment spans residues 487–509 (MTVSYMSGLTLGSAVAYCTYSLT). Residues 510–530 (RDAHGSCLHASTANGSILAGL) lie on the Extracellular side of the membrane. N523 carries N-linked (GlcNAc...) asparagine glycosylation.

It belongs to the SLC29A/ENT transporter (TC 2.A.57) family. N-glycosylated. In terms of tissue distribution, mainly expressed in brain and skeletal muscle. In brain, expressed in cerebellum, cerebral cortex, medulla oblongata, occipital pole, frontal and temporal lobes putamen, spinal cord, substancia nigra, hippocampus, caudate nucleus, nucleus accumbens, pons and choroid plexus. Expressed in heart, in both cardiomyocytes and vascular endothelial cells. Also expressed in adrenal gland, small intestine, pancreas, kidney, liver, bone marrow, lymph node. Located in endometrial stroma, where the expression is high in the proliferative phase, decreases during the secretory phase, and is no longer detectable in the menstrual phase.

It is found in the cell membrane. Its subcellular location is the apical cell membrane. It carries out the reaction serotonin(out) = serotonin(in). It catalyses the reaction dopamine(out) = dopamine(in). The catalysed reaction is (R)-noradrenaline(out) = (R)-noradrenaline(in). The enzyme catalyses (R)-adrenaline(out) = (R)-adrenaline(in). It carries out the reaction histamine(out) = histamine(in). It catalyses the reaction tyramine(in) = tyramine(out). The catalysed reaction is guanidine(out) = guanidine(in). The enzyme catalyses adenosine(in) = adenosine(out). With respect to regulation, activated at acidic pH. Electrogenic voltage-dependent transporter that mediates the transport of a variety of endogenous bioactive amines, cationic xenobiotics and drugs. Utilizes the physiologic inside-negative membrane potential as a driving force to facilitate cellular uptake of organic cations. Functions as a Na(+)- and Cl(-)-independent bidirectional transporter. Substrate transport is pH-dependent and enhanced under acidic condition, which is most likely the result of allosteric changes in the transporter structure. Implicated in monoamine neurotransmitters uptake such as serotonin, dopamine, adrenaline/epinephrine, noradrenaline/norepinephrine, histamine and tyramine, thereby supporting a role in homeostatic regulation of aminergic neurotransmission in the central nervous system. Also responsible for the uptake of bioactive amines and drugs through the blood-cerebrospinal fluid (CSF) barrier, from the CSF into choroid plexus epithelial cells, thereby playing a significant role in the clearance of cationic neurotoxins, xenobiotics and metabolic waste in the brain. Involved in bidirectional transport of the purine nucleoside adenosine and plays a role in the regulation of extracellular adenosine concentrations in cardiac tissues, in particular during ischemia. May be involved in organic cation uptake from the tubular lumen into renal tubular cells, thereby contributing to organic cation reabsorption in the kidney. Also transports guanidine. This Homo sapiens (Human) protein is Equilibrative nucleoside transporter 4.